Consider the following 248-residue polypeptide: Probable transcriptional regulatory protein BBta_6910 (248 aa).

Belongs to the TACO1 family.

The protein localises to the cytoplasm. This is Probable transcriptional regulatory protein BBta_6910 from Bradyrhizobium sp. (strain BTAi1 / ATCC BAA-1182).